We begin with the raw amino-acid sequence, 165 residues long: Probable cell wall protein PGA15 (165 aa).

Residues 1–16 form the signal peptide; sequence MKFIIILFTLISIVTA. Serine 143 carries the GPI-anchor amidated serine lipid modification. Positions 144-165 are cleaved as a propeptide — removed in mature form; the sequence is GAANYLTSFSIGTFFVFVLGLI.

It belongs to the IHD1 family. In terms of processing, the GPI-anchor is attached to the protein in the endoplasmic reticulum and serves to target the protein to the cell surface. There, the glucosamine-inositol phospholipid moiety is cleaved off and the GPI-modified mannoprotein is covalently attached via its lipidless GPI glycan remnant to the 1,6-beta-glucan of the outer cell wall layer.

The protein localises to the secreted. Its subcellular location is the cell wall. It localises to the membrane. Probable GPI-anchored cell wall protein that may be involved in cell wall organization, hyphal growth, as well as in virulence. The polypeptide is Probable cell wall protein PGA15 (PGA15) (Candida albicans (strain SC5314 / ATCC MYA-2876) (Yeast)).